Consider the following 626-residue polypeptide: 1-deoxy-D-xylulose-5-phosphate synthase 2 (626 aa).

Residues His74 and 115–117 (GHA) each bind thiamine diphosphate. Position 146 (Asp146) interacts with Mg(2+). Residues 147–148 (GS), Asn175, Phe286, and Glu368 contribute to the thiamine diphosphate site. Asn175 is a Mg(2+) binding site.

The protein belongs to the transketolase family. DXPS subfamily. As to quaternary structure, homodimer. The cofactor is Mg(2+). Thiamine diphosphate is required as a cofactor.

It carries out the reaction D-glyceraldehyde 3-phosphate + pyruvate + H(+) = 1-deoxy-D-xylulose 5-phosphate + CO2. It participates in metabolic intermediate biosynthesis; 1-deoxy-D-xylulose 5-phosphate biosynthesis; 1-deoxy-D-xylulose 5-phosphate from D-glyceraldehyde 3-phosphate and pyruvate: step 1/1. Catalyzes the acyloin condensation reaction between C atoms 2 and 3 of pyruvate and glyceraldehyde 3-phosphate to yield 1-deoxy-D-xylulose-5-phosphate (DXP). The chain is 1-deoxy-D-xylulose-5-phosphate synthase 2 from Geobacter sulfurreducens (strain ATCC 51573 / DSM 12127 / PCA).